A 99-amino-acid polypeptide reads, in one-letter code: NADH-quinone oxidoreductase subunit K (99 aa).

The next 3 helical transmembrane spans lie at 3-23 (PTYYLLLSALLFSIGAVGVLV), 28-48 (IVVFMCVELMLNAVNLTLVTF), and 59-79 (VMAFFVMVVAAAEVVVGLAII).

Belongs to the complex I subunit 4L family. As to quaternary structure, NDH-1 is composed of 14 different subunits. Subunits NuoA, H, J, K, L, M, N constitute the membrane sector of the complex.

The protein resides in the cell membrane. It catalyses the reaction a quinone + NADH + 5 H(+)(in) = a quinol + NAD(+) + 4 H(+)(out). In terms of biological role, NDH-1 shuttles electrons from NADH, via FMN and iron-sulfur (Fe-S) centers, to quinones in the respiratory chain. The immediate electron acceptor for the enzyme in this species is believed to be a menaquinone. Couples the redox reaction to proton translocation (for every two electrons transferred, four hydrogen ions are translocated across the cytoplasmic membrane), and thus conserves the redox energy in a proton gradient. This Saccharopolyspora erythraea (strain ATCC 11635 / DSM 40517 / JCM 4748 / NBRC 13426 / NCIMB 8594 / NRRL 2338) protein is NADH-quinone oxidoreductase subunit K.